Consider the following 411-residue polypeptide: Citrate synthase (411 aa).

Active-site residues include histidine 304 and aspartate 363.

It belongs to the citrate synthase family.

It catalyses the reaction oxaloacetate + acetyl-CoA + H2O = citrate + CoA + H(+). The protein operates within carbohydrate metabolism; tricarboxylic acid cycle; isocitrate from oxaloacetate: step 1/2. This is Citrate synthase (gltA) from Rickettsia conorii subsp. caspia (strain A-167) (Astrakhan rickettsia).